A 424-amino-acid chain; its full sequence is Ankyrin repeat domain-containing protein 61 (424 aa).

ANK repeat units lie at residues 80–109 (LSFLPIHLAAKYRKAQSLLCLLEHGADPEA), 113–169 (QGFT…ARVD), 172–201 (HRHCPLHLATIYGTHLVLSILAQNGAQVNA), 205–234 (SSMTPLHMAADILNKEMMQTLIAWGASVNC), 239–278 (TGNTALKLAVSTASSKAGRLLAAGLGCIRLLLVHGAQVNA), 282–311 (DGQAAIHEACFGGREVIINLLLEFEANVNI), and 315–348 (NGESPIHMYLQRGSNIRDTALLARLLFRSYPLRL).

This is Ankyrin repeat domain-containing protein 61 (ANKRD61) from Bos taurus (Bovine).